Reading from the N-terminus, the 161-residue chain is Eukaryotic translation initiation factor 5A-2 (161 aa).

Hypusine is present on Lys54.

Belongs to the eIF-5A family. Lys-54 undergoes hypusination, a unique post-translational modification that consists in the addition of a butylamino group from spermidine to lysine side chain and leads to the formation of a hypusine residue. eIF-5As are the only known proteins to undergo this modification, which is essential for their function. In terms of tissue distribution, expressed in the somatic tissues.

The protein localises to the cytoplasm. In terms of biological role, translation factor that promotes translation elongation and termination, particularly upon ribosome stalling at specific amino acid sequence contexts. Binds between the exit (E) and peptidyl (P) site of the ribosome and promotes rescue of stalled ribosome: specifically required for efficient translation of polyproline-containing peptides as well as other motifs that stall the ribosome. Acts as a ribosome quality control (RQC) cofactor by joining the RQC complex to facilitate peptidyl transfer during CAT tailing step. Acts in somatic tissues and its function in the soma is essential for normal growth and reproduction. The sequence is that of Eukaryotic translation initiation factor 5A-2 (iff-2) from Caenorhabditis elegans.